The chain runs to 228 residues: Imidazole glycerol phosphate synthase subunit HisH (228 aa).

The Glutamine amidotransferase type-1 domain occupies 4-218; that stretch reads DIAVVDYGMG…VTWNPGEHAS (215 aa). The active-site Nucleophile is the cysteine 83. Catalysis depends on residues histidine 193 and glutamate 195.

Heterodimer of HisH and HisF.

The protein localises to the cytoplasm. It carries out the reaction 5-[(5-phospho-1-deoxy-D-ribulos-1-ylimino)methylamino]-1-(5-phospho-beta-D-ribosyl)imidazole-4-carboxamide + L-glutamine = D-erythro-1-(imidazol-4-yl)glycerol 3-phosphate + 5-amino-1-(5-phospho-beta-D-ribosyl)imidazole-4-carboxamide + L-glutamate + H(+). It catalyses the reaction L-glutamine + H2O = L-glutamate + NH4(+). Its pathway is amino-acid biosynthesis; L-histidine biosynthesis; L-histidine from 5-phospho-alpha-D-ribose 1-diphosphate: step 5/9. Functionally, IGPS catalyzes the conversion of PRFAR and glutamine to IGP, AICAR and glutamate. The HisH subunit catalyzes the hydrolysis of glutamine to glutamate and ammonia as part of the synthesis of IGP and AICAR. The resulting ammonia molecule is channeled to the active site of HisF. This Thiobacillus denitrificans (strain ATCC 25259 / T1) protein is Imidazole glycerol phosphate synthase subunit HisH.